A 189-amino-acid chain; its full sequence is Alanine and glycine-rich protein (189 aa).

The segment covering 127–160 (AGAGGGSGGGGGGGSGSGGSGGSGGSGGSGGNDG) has biased composition (gly residues). Residues 127-170 (AGAGGGSGGGGGGGSGSGGSGGSGGSGGSGGNDGNDGNDGSSSR) form a disordered region.

Component of the organic matrix of calcified shell layers like nacre and prisms.

The protein localises to the secreted. The sequence is that of Alanine and glycine-rich protein from Mytilus californianus (California mussel).